We begin with the raw amino-acid sequence, 276 residues long: Shikimate dehydrogenase (NADP(+)) (276 aa).

Shikimate contacts are provided by residues 15-17 and Thr62; that span reads SKS. The active-site Proton acceptor is the Lys66. Shikimate-binding residues include Asn87 and Asp103. NADP(+) contacts are provided by residues 127-131, 151-156, and Met215; these read GAGGA and NRTLSK. Tyr217 contributes to the shikimate binding site. Gly239 contributes to the NADP(+) binding site.

This sequence belongs to the shikimate dehydrogenase family. As to quaternary structure, homodimer.

The catalysed reaction is shikimate + NADP(+) = 3-dehydroshikimate + NADPH + H(+). The protein operates within metabolic intermediate biosynthesis; chorismate biosynthesis; chorismate from D-erythrose 4-phosphate and phosphoenolpyruvate: step 4/7. Functionally, involved in the biosynthesis of the chorismate, which leads to the biosynthesis of aromatic amino acids. Catalyzes the reversible NADPH linked reduction of 3-dehydroshikimate (DHSA) to yield shikimate (SA). This chain is Shikimate dehydrogenase (NADP(+)), found in Cellvibrio japonicus (strain Ueda107) (Pseudomonas fluorescens subsp. cellulosa).